A 62-amino-acid chain; its full sequence is Large ribosomal subunit protein bL33 (62 aa).

It belongs to the bacterial ribosomal protein bL33 family.

The protein is Large ribosomal subunit protein bL33 of Phocaeicola vulgatus (strain ATCC 8482 / DSM 1447 / JCM 5826 / CCUG 4940 / NBRC 14291 / NCTC 11154) (Bacteroides vulgatus).